A 35-amino-acid polypeptide reads, in one-letter code: Mu-theraphotoxin-Hd1a (35 aa).

3 disulfides stabilise this stretch: C2-C17, C9-C24, and C16-C31.

The protein belongs to the neurotoxin 10 (Hwtx-1) family. 22 (Htx-4) subfamily. As to expression, expressed by the venom gland.

The protein resides in the secreted. Gating-modifier toxin that reversibly and voltage-independently inhibits human Nav1.1/SCN1A and Nav1.7/SCN9A (IC(50)=111 nM). It also shows moderate inhibition on Nav1.2/SCN2A (1 uM inhibits current by 55%), Nav1.6/SCN8A (31%), Nav1.3/SCN5A (27%) and Nav1.4/SCN4A (23%). This toxin inhibits Nav1.7/SCN9A by interacting with the S3b-S4 paddle motif in channel domain II. In Cyriopagopus doriae (Tarantula spider), this protein is Mu-theraphotoxin-Hd1a.